Consider the following 118-residue polypeptide: Small ribosomal subunit protein uS13 (118 aa).

The interval 96–118 is disordered; the sequence is PLRGQRTRTNARTRKGPRKAIKK.

The protein belongs to the universal ribosomal protein uS13 family. In terms of assembly, part of the 30S ribosomal subunit. Forms a loose heterodimer with protein S19. Forms two bridges to the 50S subunit in the 70S ribosome.

Its function is as follows. Located at the top of the head of the 30S subunit, it contacts several helices of the 16S rRNA. In the 70S ribosome it contacts the 23S rRNA (bridge B1a) and protein L5 of the 50S subunit (bridge B1b), connecting the 2 subunits; these bridges are implicated in subunit movement. Contacts the tRNAs in the A and P-sites. The polypeptide is Small ribosomal subunit protein uS13 (Stenotrophomonas maltophilia (strain K279a)).